The primary structure comprises 1267 residues: Eukaryotic translation initiation factor 3 subunit A (1267 aa).

Residues 82–118 are a coiled coil; that stretch reads NIKSLEDVVRAYLKLAEEKTETAKEESQQMVLDIEDL. Residues 315–498 form the PCI domain; that stretch reads MQRMSTRVLL…RTLSFGSDLN (184 aa). 3 stretches are compositionally biased toward basic and acidic residues: residues 792–835, 844–1086, and 1098–1147; these read EERK…LEQE, YQER…DSRP, and WRER…EGSA. Residues 792 to 1267 are disordered; it reads EERKKQRKED…DDDGWTTVRR (476 aa). 3 consecutive repeat copies span residues 956-965, 966-975, and 976-985. The tract at residues 956-1073 is 12 X 10 AA approximate tandem repeats of D-[DE]-[DE]-R-[GP]-[GPQT]-R-R-[GPS]-[ADFGIM]; the sequence is DDDRGPRRGG…DDERGGRRGM (118 aa). A 4; truncated repeat occupies 986 to 994; that stretch reads DDDRGQRRG. Tandem repeats lie at residues 995 to 1004 and 1005 to 1014. One copy of the 7; truncated repeat lies at 1015–1023; that stretch reads DDDRGPRRS. Repeat copies occupy residues 1024–1033 and 1034–1043. Residues 1044-1053 form a 10; approximate repeat; that stretch reads DEPRGPRRGA. Copy 11 of the repeat occupies 1054 to 1063; sequence DDDWGPRRGG. The 12; approximate repeat unit spans residues 1064–1073; the sequence is DDERGGRRGM. The segment covering 1150–1159 has biased composition (gly residues); that stretch reads RGGGGGGGGE. Residues 1162–1256 show a composition bias toward basic and acidic residues; sequence SSWRDSRRED…KENPRRTKNE (95 aa).

The protein belongs to the eIF-3 subunit A family. Component of the eukaryotic translation initiation factor 3 (eIF-3) complex, which is composed of 13 subunits: eif3a, eif3b, eif3c, eif3d, eif3e, eif3f, eif3g, eif3h, eif3i, eif3j, eif3k, eif3l and eif3m.

It is found in the cytoplasm. RNA-binding component of the eukaryotic translation initiation factor 3 (eIF-3) complex, which is involved in protein synthesis of a specialized repertoire of mRNAs and, together with other initiation factors, stimulates binding of mRNA and methionyl-tRNAi to the 40S ribosome. The eIF-3 complex specifically targets and initiates translation of a subset of mRNAs involved in cell proliferation. In Danio rerio (Zebrafish), this protein is Eukaryotic translation initiation factor 3 subunit A (eif3a).